The primary structure comprises 343 residues: MKAPRLTDTTLRDGSHPMRHQFTREQVAKIVQALDRAGVPVIEVSHGDGLAGSSLQYGFSHTSEFDLIETARSYAERAKIAALMLPGIGTRQELKEAVARGIQVVRIATQCTEADISEQHFGLAKELGLETVGFLMMAHMRPPEALVEQAKLMESYGADCVYIVDSAGAMLPHDAAARVRALKEALSVQVGFHAHNNLGLGIGNTLAALEAGADQIDGCLRGLGAGAGNAATELLAAVLDRLGLNPGLDVFGLMDAAEYIVAPIMPFQPFPDRDAITIGYAGVYSTFLLHAKRAGEQYGIDPREILVELGRRQAVAGQEDWIIDVALDLSRRRGAGTRKEAHG.

The region spanning 4 to 254 (PRLTDTTLRD…NPGLDVFGLM (251 aa)) is the Pyruvate carboxyltransferase domain. Substrate is bound at residue 12 to 13 (RD). Position 13 (Asp13) interacts with Mn(2+). The active-site Proton acceptor is His16. Positions 166 and 193 each coordinate substrate. Positions 193 and 195 each coordinate Mn(2+). Tyr284 is a substrate binding site.

The protein belongs to the 4-hydroxy-2-oxovalerate aldolase family.

The catalysed reaction is (S)-4-hydroxy-2-oxopentanoate = acetaldehyde + pyruvate. This is 4-hydroxy-2-oxovalerate aldolase from Chloroflexus aggregans (strain MD-66 / DSM 9485).